A 728-amino-acid chain; its full sequence is Catalase-peroxidase 1 (728 aa).

The signal sequence occupies residues 1-16 (MDKAQHTQGKCPVAHG). Positions 97-225 (WHSAGTYRMA…LAAVMMGLIY (129 aa)) form a cross-link, tryptophyl-tyrosyl-methioninium (Trp-Tyr) (with M-251). Catalysis depends on His98, which acts as the Proton acceptor. The segment at residues 225-251 (YVNPEGVDGQPDPLKTAQDIRVTFERM) is a cross-link (tryptophyl-tyrosyl-methioninium (Tyr-Met) (with W-97)). Residue His266 coordinates heme b.

It belongs to the peroxidase family. Peroxidase/catalase subfamily. As to quaternary structure, homodimer or homotetramer. It depends on heme b as a cofactor. Formation of the three residue Trp-Tyr-Met cross-link is important for the catalase, but not the peroxidase activity of the enzyme.

The enzyme catalyses H2O2 + AH2 = A + 2 H2O. It catalyses the reaction 2 H2O2 = O2 + 2 H2O. Bifunctional enzyme with both catalase and broad-spectrum peroxidase activity. The polypeptide is Catalase-peroxidase 1 (Shewanella frigidimarina (strain NCIMB 400)).